The following is a 335-amino-acid chain: Glycerol-3-phosphate dehydrogenase [NAD(P)+] (335 aa).

NADPH-binding residues include phenylalanine 11, arginine 31, and lysine 107. Positions 107 and 135 each coordinate sn-glycerol 3-phosphate. Alanine 139 contributes to the NADPH binding site. 5 residues coordinate sn-glycerol 3-phosphate: lysine 190, aspartate 245, serine 255, arginine 256, and asparagine 257. Residue lysine 190 is the Proton acceptor of the active site. Position 256 (arginine 256) interacts with NADPH. Residues leucine 280 and glutamate 282 each coordinate NADPH.

It belongs to the NAD-dependent glycerol-3-phosphate dehydrogenase family.

It is found in the cytoplasm. It catalyses the reaction sn-glycerol 3-phosphate + NAD(+) = dihydroxyacetone phosphate + NADH + H(+). It carries out the reaction sn-glycerol 3-phosphate + NADP(+) = dihydroxyacetone phosphate + NADPH + H(+). It participates in membrane lipid metabolism; glycerophospholipid metabolism. Catalyzes the reduction of the glycolytic intermediate dihydroxyacetone phosphate (DHAP) to sn-glycerol 3-phosphate (G3P), the key precursor for phospholipid synthesis. This Anaplasma marginale (strain St. Maries) protein is Glycerol-3-phosphate dehydrogenase [NAD(P)+].